Here is a 168-residue protein sequence, read N- to C-terminus: MTMREEIEAAAARYPDRRSAIMPALMIAQKEHGHLPGPVLEEVAQILGVERVWVYELATFYTLFHTEPIGRFHLQLCDNVSCMLCGSEALLTHLETTLGIRKGETTPDGAFTLSTVECLGACEMAPVMQVGDDYHGNLDAARLDALLESFRAAERVTSVERAAAAPGE.

The [2Fe-2S] cluster site is built by Cys-77, Cys-82, Cys-118, and Cys-122.

This sequence belongs to the complex I 24 kDa subunit family. The cofactor is [2Fe-2S] cluster.

It catalyses the reaction a quinone + NADH + 5 H(+)(in) = a quinol + NAD(+) + 4 H(+)(out). Its function is as follows. NDH-1 shuttles electrons from NADH, via FMN and iron-sulfur (Fe-S) centers, to quinones in the respiratory chain. The immediate electron acceptor for the enzyme in this species is believed to be ubiquinone. Couples the redox reaction to proton translocation (for every two electrons transferred, four hydrogen ions are translocated across the cytoplasmic membrane), and thus conserves the redox energy in a proton gradient. The sequence is that of NADH-quinone oxidoreductase subunit E 2 (nuoE2) from Rhizobium meliloti (strain 1021) (Ensifer meliloti).